The following is a 4690-amino-acid chain: Nonribosomal peptide synthetase sidN (4690 aa).

The adenylation 1 stretch occupies residues 238–656 (ARVRENPGRI…LGRLSSDQIK (419 aa)). Residues 779 to 856 (SSSIPMLQSV…DLDTKAQQAL (78 aa)) form the Carrier 1 domain. Residue S816 is modified to O-(pantetheine 4'-phosphoryl)serine. The tract at residues 925 to 1175 (PGGKAFIQHT…AFGNTMSGRF (251 aa)) is condensation 1. The adenylation 2 stretch occupies residues 1349–1760 (EFAQKSPNAI…GRKDDLVKIR (412 aa)). A Carrier 2 domain is found at 1889–1965 (PAWCIKHRPL…DLINHLSVKR (77 aa)). S1926 is subject to O-(pantetheine 4'-phosphoryl)serine. A condensation 2 region spans residues 2001-2285 (PTTVFQDGML…SERLLESQLV (285 aa)). The tract at residues 2464–2869 (TWAKTHPEWK…GRKDEQVKVR (406 aa)) is adenylation 3. The 78-residue stretch at 3002-3079 (RDLTSIEKQI…ELGRMKNALK (78 aa)) folds into the Carrier 3 domain. S3040 is subject to O-(pantetheine 4'-phosphoryl)serine. Residues 3121-3530 (CMPLQEVLVA…QMESLVTSFT (410 aa)) form a condensation 3 region. Residues 3564–3637 (SVLEQQIRDV…KLATHIQTTS (74 aa)) form the Carrier 4 domain. At S3598 the chain carries O-(pantetheine 4'-phosphoryl)serine. A condensation 4 region spans residues 3679–4087 (VYPLTPLQAG…FESIRKHPDE (409 aa)). The 77-residue stretch at 4119–4195 (SAIDQFLDPL…KLCEVAFAKS (77 aa)) folds into the Carrier 5 domain. The residue at position 4156 (S4156) is an O-(pantetheine 4'-phosphoryl)serine. Residues 4262 to 4589 (WVFKAENGLD…FNAHLNILWN (328 aa)) are condensation 5.

Belongs to the NRP synthetase family.

Its pathway is siderophore biosynthesis. Functionally, nonribosomal peptide synthetase required for the biosynthetis of epichloenin A, an extracellular siderophore that plays a crucial role in endophyte-grass symbioses. SidN assembles epichloenin A by activating and incorporating three trans-anhydromevalonylhydroxyornithine (trans-AMHO), 1 glutamine and 4 glycine moieties. Trans-AMHO is produced from L-ornithine via 2 steps involving a L-ornithine N(5)-monooxygenase and an AHMO-N(5)-transacylase that have still to be identified. The third adenylation domain (A3) of sidN incorporates the hydroxamate groups of the siderophore which forms an octahedral iron complex. The other component amino acids are assembled by sidN adenylation domains A1 and A2. This chain is Nonribosomal peptide synthetase sidN, found in Epichloe festucae (strain E2368).